The following is a 198-amino-acid chain: Na(+)-translocating NADH-quinone reductase subunit E (198 aa).

Transmembrane regions (helical) follow at residues 11-31, 39-59, 77-97, 110-130, 140-160, and 176-196; these read SIFI…FLAV, MGLG…NNLI, FLSF…LEMA, GIFL…SFMV, VVYG…MAGI, and LGIT…FSGI.

The protein belongs to the NqrDE/RnfAE family. In terms of assembly, composed of six subunits; NqrA, NqrB, NqrC, NqrD, NqrE and NqrF.

It is found in the cell inner membrane. The enzyme catalyses a ubiquinone + n Na(+)(in) + NADH + H(+) = a ubiquinol + n Na(+)(out) + NAD(+). Functionally, NQR complex catalyzes the reduction of ubiquinone-1 to ubiquinol by two successive reactions, coupled with the transport of Na(+) ions from the cytoplasm to the periplasm. NqrA to NqrE are probably involved in the second step, the conversion of ubisemiquinone to ubiquinol. The polypeptide is Na(+)-translocating NADH-quinone reductase subunit E (Aeromonas hydrophila subsp. hydrophila (strain ATCC 7966 / DSM 30187 / BCRC 13018 / CCUG 14551 / JCM 1027 / KCTC 2358 / NCIMB 9240 / NCTC 8049)).